The following is a 422-amino-acid chain: Serine--tRNA ligase (422 aa).

T229–E231 lines the L-serine pocket. ATP is bound at residue R260–E262. E283 is an L-serine binding site. Residue E347–S350 participates in ATP binding. Residue S383 coordinates L-serine.

Belongs to the class-II aminoacyl-tRNA synthetase family. Type-1 seryl-tRNA synthetase subfamily. In terms of assembly, homodimer. The tRNA molecule binds across the dimer.

Its subcellular location is the cytoplasm. It carries out the reaction tRNA(Ser) + L-serine + ATP = L-seryl-tRNA(Ser) + AMP + diphosphate + H(+). The enzyme catalyses tRNA(Sec) + L-serine + ATP = L-seryl-tRNA(Sec) + AMP + diphosphate + H(+). It participates in aminoacyl-tRNA biosynthesis; selenocysteinyl-tRNA(Sec) biosynthesis; L-seryl-tRNA(Sec) from L-serine and tRNA(Sec): step 1/1. Its function is as follows. Catalyzes the attachment of serine to tRNA(Ser). Is also able to aminoacylate tRNA(Sec) with serine, to form the misacylated tRNA L-seryl-tRNA(Sec), which will be further converted into selenocysteinyl-tRNA(Sec). This is Serine--tRNA ligase from Geobacter sp. (strain M21).